The primary structure comprises 230 residues: UPF0173 metal-dependent hydrolase SPO2976 (230 aa).

The protein belongs to the UPF0173 family.

This is UPF0173 metal-dependent hydrolase SPO2976 from Ruegeria pomeroyi (strain ATCC 700808 / DSM 15171 / DSS-3) (Silicibacter pomeroyi).